We begin with the raw amino-acid sequence, 248 residues long: MSGLLVNKTAIVTGGSRGIGFSIAKLFAEQGANVQIWGINGEAGQAAAQTLSEQTGRQVSFALVDVSKNDMVSAQVQNFLAEYNTIDVIVNNAGITRDALLMRMSEEEWSSVINTNLGSIYNVCSAVIRPMIKARSGAIINISSIVGLRGSPGQTNYAAAKAGIIGFSKALSKEVGSKNIRVNCIAPGFIDTDMTKSLNDNLKNEWLKGVPLGRVGMPEEIAKAALFLASDGSSYITGQVLSVDGGMA.

NADP(+) contacts are provided by residues 14 to 17 (GGSR), 65 to 66 (DV), and Asn92. Position 144 (Ser144) interacts with substrate. The active-site Proton acceptor is the Tyr157. NADP(+)-binding positions include 157–161 (YAAAK) and Ile190.

It belongs to the short-chain dehydrogenases/reductases (SDR) family. As to quaternary structure, homotetramer.

It catalyses the reaction a (3R)-hydroxyacyl-[ACP] + NADP(+) = a 3-oxoacyl-[ACP] + NADPH + H(+). It participates in lipid metabolism; fatty acid biosynthesis. In terms of biological role, catalyzes the NADPH-dependent reduction of beta-ketoacyl-ACP substrates to beta-hydroxyacyl-ACP products, the first reductive step in the elongation cycle of fatty acid biosynthesis. In Chlamydia trachomatis serovar D (strain ATCC VR-885 / DSM 19411 / UW-3/Cx), this protein is 3-oxoacyl-[acyl-carrier-protein] reductase FabG (fabG).